We begin with the raw amino-acid sequence, 722 residues long: uncharacterized protein (722 aa).

Active-site charge relay system residues include serine 575, aspartate 658, and histidine 691.

It belongs to the peptidase S9B family.

This is an uncharacterized protein from Rickettsia prowazekii (strain Madrid E).